A 161-amino-acid chain; its full sequence is Nucleotide-binding protein Bamb_2603 (161 aa).

It belongs to the YajQ family.

Nucleotide-binding protein. The polypeptide is Nucleotide-binding protein Bamb_2603 (Burkholderia ambifaria (strain ATCC BAA-244 / DSM 16087 / CCUG 44356 / LMG 19182 / AMMD) (Burkholderia cepacia (strain AMMD))).